The following is a 103-amino-acid chain: Flagellar hook-basal body complex protein FliE (103 aa).

This sequence belongs to the FliE family.

The protein localises to the bacterial flagellum basal body. The polypeptide is Flagellar hook-basal body complex protein FliE (Helicobacter hepaticus (strain ATCC 51449 / 3B1)).